Reading from the N-terminus, the 188-residue chain is Ribosome-recycling factor (188 aa).

The protein belongs to the RRF family.

The protein resides in the cytoplasm. Functionally, responsible for the release of ribosomes from messenger RNA at the termination of protein biosynthesis. May increase the efficiency of translation by recycling ribosomes from one round of translation to another. The chain is Ribosome-recycling factor from Caulobacter sp. (strain K31).